The chain runs to 566 residues: Oxygen-dependent choline dehydrogenase (566 aa).

Position 7–36 (Asp7–Glu36) interacts with FAD. A disordered region spans residues Asn180–Thr203. Residue His474 is the Proton acceptor of the active site.

This sequence belongs to the GMC oxidoreductase family. FAD is required as a cofactor.

It catalyses the reaction choline + A = betaine aldehyde + AH2. It carries out the reaction betaine aldehyde + NAD(+) + H2O = glycine betaine + NADH + 2 H(+). It participates in amine and polyamine biosynthesis; betaine biosynthesis via choline pathway; betaine aldehyde from choline (cytochrome c reductase route): step 1/1. Functionally, involved in the biosynthesis of the osmoprotectant glycine betaine. Catalyzes the oxidation of choline to betaine aldehyde and betaine aldehyde to glycine betaine at the same rate. The sequence is that of Oxygen-dependent choline dehydrogenase from Burkholderia ambifaria (strain MC40-6).